Reading from the N-terminus, the 455-residue chain is Phosphoglucosamine mutase (455 aa).

Catalysis depends on S102, which acts as the Phosphoserine intermediate. Positions 102, 241, 243, and 245 each coordinate Mg(2+). S102 is subject to Phosphoserine.

The protein belongs to the phosphohexose mutase family. The cofactor is Mg(2+). Post-translationally, activated by phosphorylation.

It catalyses the reaction alpha-D-glucosamine 1-phosphate = D-glucosamine 6-phosphate. In terms of biological role, catalyzes the conversion of glucosamine-6-phosphate to glucosamine-1-phosphate. The chain is Phosphoglucosamine mutase from Legionella pneumophila (strain Paris).